Here is a 2295-residue protein sequence, read N- to C-terminus: Protein DOP1B (2295 aa).

Ser-556 and Ser-597 each carry phosphoserine. 4 disordered regions span residues 574–599 (AGDE…SSPE), 651–684 (GEEN…DPKP), 1034–1059 (CKEA…QFTT), and 1092–1136 (DLPD…LQDL). Residues 1111-1131 (ADTSSGHTDSENTSTFSSPSH) are compositionally biased toward polar residues. The residue at position 1167 (Ser-1167) is a Phosphoserine.

The protein belongs to the DOP1 family. Homooligomer. Heterotrimer with ATP9A and MON2; this interaction is retromer-independent. Interacts with SNX3. As to expression, expressed in liver, heart and brain.

It localises to the early endosome membrane. The protein localises to the golgi apparatus membrane. May play a role in regulating membrane trafficking of cargo proteins. Together with ATP9A and MON2, regulates SNX3 retromer-mediated endosomal sorting of WLS away from lysosomal degradation. In Mus musculus (Mouse), this protein is Protein DOP1B (Dop1b).